The following is a 503-amino-acid chain: Basic immunoglobulin-like variable motif-containing protein (503 aa).

Over residues 1 to 26 the composition is skewed to basic and acidic residues; it reads MPNVAETERSNDSGNGEHKSERKSPE. Disordered regions lie at residues 1–33, 152–184, and 438–469; these read MPNVAETERSNDSGNGEHKSERKSPEENLQGAV, TTNSKHKSGNAKKQVSKRKTSDKKGRYQKECPQ, and ESQPPTHAQGIAKSESEDNISKKQHGRLGRSF. Residues 155–172 are compositionally biased toward basic residues; the sequence is SKHKSGNAKKQVSKRKTS. Basic and acidic residues predominate over residues 173–184; the sequence is DKKGRYQKECPQ.

This sequence belongs to the BIVM family. In terms of tissue distribution, widely expressed. Expressed at higher level in spleen, ovary, small intestine, colon, peripheral blood leukocytes and liver. Also expressed in testis, ovary, aorta, appendix, trachea, pituitary gland, bladder, uterus, spinal cord, salivary gland, stomach, mammary gland and bone marrow. Weakly or not expressed in fetal spleen, adult thymus and certain cancer cell lines.

The protein localises to the cytoplasm. It localises to the nucleus. The sequence is that of Basic immunoglobulin-like variable motif-containing protein (BIVM) from Homo sapiens (Human).